Consider the following 284-residue polypeptide: ELMO domain-containing protein B (284 aa).

Residues 124–276 (EHEASLERLW…EFETKISQNS (153 aa)) enclose the ELMO domain.

This is ELMO domain-containing protein B (elmoB) from Dictyostelium discoideum (Social amoeba).